The chain runs to 591 residues: Metalloendopeptidase OPG085 (591 aa).

His41 serves as a coordination point for Zn(2+). Residue Glu44 is part of the active site. Residues His45 and Glu112 each coordinate Zn(2+).

Belongs to the peptidase M44 family. Requires Zn(2+) as cofactor. Post-translationally, undergoes proteolytic processing during the course of infection. May be cleaved into 46 kDa and 22 kDa products (Potential).

The protein localises to the virion. Its function is as follows. Probably involved in maturation of some viral proteins by processing them preferentially at Ala-Gly-|-Ser/Thr/Lys motifs. Does not seem to be responsible for the cleavage of major core proteins. This chain is Metalloendopeptidase OPG085 (OPG085), found in Homo sapiens (Human).